A 427-amino-acid polypeptide reads, in one-letter code: UBX domain-containing protein 2 (427 aa).

2 disordered regions span residues 115–143 (FDQS…SRAS) and 273–331 (ETSG…GVAD). The span at 311–326 (STTESQGESSSQQAES) shows a compositional bias: low complexity. Residues 349–425 (PGPNVTRIQI…GIQNTALQFE (77 aa)) enclose the UBX domain. S371 is modified (phosphoserine).

Interacts with cdc48.

In terms of biological role, involved in CDC48-dependent protein degradation through the ubiquitin/proteasome pathway. The polypeptide is UBX domain-containing protein 2 (ubx2) (Schizosaccharomyces pombe (strain 972 / ATCC 24843) (Fission yeast)).